The primary structure comprises 334 residues: tRNA N6-adenosine threonylcarbamoyltransferase (334 aa).

Fe cation contacts are provided by H107 and H111. Residues 129–133 (LVSGG), D162, G175, and N269 contribute to the substrate site. Residue D297 coordinates Fe cation.

It belongs to the KAE1 / TsaD family. Fe(2+) serves as cofactor.

The protein localises to the cytoplasm. The catalysed reaction is L-threonylcarbamoyladenylate + adenosine(37) in tRNA = N(6)-L-threonylcarbamoyladenosine(37) in tRNA + AMP + H(+). Functionally, required for the formation of a threonylcarbamoyl group on adenosine at position 37 (t(6)A37) in tRNAs that read codons beginning with adenine. Is involved in the transfer of the threonylcarbamoyl moiety of threonylcarbamoyl-AMP (TC-AMP) to the N6 group of A37, together with TsaE and TsaB. TsaD likely plays a direct catalytic role in this reaction. The protein is tRNA N6-adenosine threonylcarbamoyltransferase of Campylobacter concisus (strain 13826).